Here is an 859-residue protein sequence, read N- to C-terminus: Leucine--tRNA ligase (859 aa).

Positions 42–52 match the 'HIGH' region motif; the sequence is PYPSGRLHMGH. A 'KMSKS' region motif is present at residues 618–622; sequence KMSKS. Lys621 is a binding site for ATP.

Belongs to the class-I aminoacyl-tRNA synthetase family.

The protein localises to the cytoplasm. The enzyme catalyses tRNA(Leu) + L-leucine + ATP = L-leucyl-tRNA(Leu) + AMP + diphosphate. The sequence is that of Leucine--tRNA ligase from Shewanella putrefaciens (strain CN-32 / ATCC BAA-453).